The sequence spans 126 residues: MSDALVWQVIRNNSAFLRTQRGIGKRFSTEKFNLKKVNSPKYSGLANKHAIDVSAAAKGVVVSTKNEKGRPAKAVTTSTLSKTPVASVRRLAKNAGFNKFNKLAQRRAAAIVRSQVKKAKVQKTDA.

Ser-2 is modified (N-acetylserine).

Belongs to the eukaryotic ribosomal protein eL28 family.

This chain is Large ribosomal subunit protein eL28 (rpl-28), found in Caenorhabditis elegans.